The primary structure comprises 113 residues: Cell cycle control protein 50C (113 aa).

The Cytoplasmic portion of the chain corresponds to M1–R34. The helical transmembrane segment at V35–L55 threads the bilayer. The Extracellular segment spans residues S56–H113. A glycan (N-linked (GlcNAc...) asparagine) is linked at N66.

It belongs to the CDC50/LEM3 family. In terms of tissue distribution, specifically expressed in testis.

The protein resides in the membrane. The protein is Cell cycle control protein 50C of Homo sapiens (Human).